Reading from the N-terminus, the 1817-residue chain is Nuclear pore complex protein Nup98-Nup96 (1817 aa).

The interval 1-156 (MFNKSFGTPF…LFGPSSFTAA (156 aa)) is FG repeats 1. The interval 157 to 213 (PTGTTIKFNPPTGTDTMVKAGVSTNISTKHQCITAMKEYESKSLEELRLEDYQANRK) is GLEBS; interaction with RAE1. Residues 214–480 (GPQNQVGAGT…NTTTATLGFG (267 aa)) are FG repeats 2. A disordered region spans residues 512 to 535 (PFGDSPLFRNPMSDPKKKEERLKP). Ser-524 is modified (phosphoserine). A compositionally biased stretch (basic and acidic residues) spans 525 to 534 (DPKKKEERLK). Lys-563 participates in a covalent cross-link: Glycyl lysine isopeptide (Lys-Gly) (interchain with G-Cter in SUMO2). At Lys-603 the chain carries N6-acetyllysine; alternate. Lys-603 is covalently cross-linked (Glycyl lysine isopeptide (Lys-Gly) (interchain with G-Cter in SUMO2); alternate). Ser-608, Ser-612, Ser-618, Ser-623, Ser-625, and Ser-653 each carry phosphoserine. Residues 614–633 (VNRDSENLASPSEYPENGER) form a disordered region. The segment at 662-682 (PIAKPIPQTPESAGNKHSNSN) is disordered. A Glycyl lysine isopeptide (Lys-Gly) (interchain with G-Cter in SUMO2) cross-link involves residue Lys-665. Residue Thr-670 is modified to Phosphothreonine. Residues 670-682 (TPESAGNKHSNSN) show a composition bias toward polar residues. Phosphoserine is present on residues Ser-673, Ser-681, Ser-683, and Ser-839. In terms of domain architecture, Peptidase S59 spans 738-880 (KVGYYTIPSM…GSWVFKVSHF (143 aa)). The Nucleophile role is filled by Ser-881. Residues 886–937 (QDSDEEEEEHPSKTSTKKLKTAPLPPASQTTPLQMALNGKPAPPPQSQSPEV) are disordered. Residues Ser-888, Ser-897, and Ser-934 each carry the phosphoserine modification. At Thr-1000 the chain carries Phosphothreonine. Phosphoserine occurs at positions 1023, 1028, 1043, 1060, and 1064. Thr-1070 is subject to Phosphothreonine. The residue at position 1329 (Ser-1329) is a Phosphoserine. A Phosphothreonine modification is found at Thr-1772.

Belongs to the nucleoporin GLFG family. Part of the nuclear pore complex (NPC). Interacts directly with NUP96. Part of the Nup160 subcomplex in the nuclear pore which is composed of NUP160, NUP133, NUP107 and NUP96; this complex plays a role in RNA export and in tethering NUP98 and NUP153 to the nucleus. Interacts with RAE1. Does not interact with TPR. Interacts with NUP88. Interacts directly with NUP88 and NUP214, subunits of the cytoplasmic filaments of the NPC. Interacts (via N-terminus) with DHX9 (via DRBM, OB-fold and RGG domains); this interaction occurs in a RNA-dependent manner and stimulates DHX9-mediated ATPase activity. In terms of assembly, (Microbial infection) Interacts with HIV-1 capsid protein P24 and nucleocapsid protein P7 (in vitro); the interaction may promote the integration of the virus in the host nucleus (in vitro). As to quaternary structure, (Microbial infection) Interacts with vesicular stomatitis virus protein M. (Microbial infection) Interacts with SARS coronavirus-2/SARS-CoV-2 ORF6 protein; the interaction blocks STAT1 nuclear translocation, antagonizes interferon signaling and blocks mRNA nuclear export (ex vivo). In terms of assembly, (Microbial infection) Interacts with SARS coronavirus/SARS-CoV ORF6 protein. Isoform 1 to isoform 4 are autoproteolytically cleaved to yield Nup98 and Nup96 or Nup98 only, respectively. Cleaved Nup98 is necessary for the targeting of Nup98 to the nuclear pore and the interaction with Nup96. In terms of processing, proteolytically degraded after poliovirus (PV) infection; degradation is partial and NCP- and TPR-binding domains withstand degradation.

It is found in the nucleus membrane. It localises to the nucleus. Its subcellular location is the nuclear pore complex. The protein localises to the nucleoplasm. Functionally, plays a role in the nuclear pore complex (NPC) assembly and/or maintenance. NUP98 and NUP96 are involved in the bidirectional transport across the NPC. May anchor NUP153 and TPR to the NPC. In cooperation with DHX9, plays a role in transcription and alternative splicing activation of a subset of genes. Involved in the localization of DHX9 in discrete intranuclear foci (GLFG-body). Its function is as follows. (Microbial infection) Interacts with HIV-1 capsid protein P24 and nucleocapsid protein P7 and may thereby promote the integration of the virus in the host nucleus (in vitro). Binding affinity to HIV-1 CA-NC complexes bearing the capsid change Asn-74-Asp is reduced (in vitro). The protein is Nuclear pore complex protein Nup98-Nup96 of Homo sapiens (Human).